The chain runs to 1604 residues: Metabotropic glutamate receptor-like protein R (1604 aa).

A signal peptide spans 1–27 (MVIKKPFIFIFICFLICLLICIDLTNC). The Extracellular portion of the chain corresponds to 28-1149 (NTINNNNNNN…TDVSKTKIAK (1122 aa)). A compositionally biased stretch (low complexity) spans 38–69 (NNNNNNNNNNNNNNNNNNNNNNNNNNNNNNDN). A disordered region spans residues 38-72 (NNNNNNNNNNNNNNNNNNNNNNNNNNNNNNDNNEN). Positions 98-133 (DFYINKIKKEIKDREKYKNNIENEILKINSQKKRKK) form a coiled coil. The interval 213–263 (NNNNNNNNNNNNNNNNNNKNNNNNNNNKNNNNNNNNKNNNNNNNNKNNNKN) is disordered. 23 N-linked (GlcNAc...) asparagine glycosylation sites follow: asparagine 285, asparagine 327, asparagine 359, asparagine 375, asparagine 489, asparagine 498, asparagine 525, asparagine 577, asparagine 593, asparagine 624, asparagine 768, asparagine 837, asparagine 841, asparagine 851, asparagine 864, asparagine 876, asparagine 885, asparagine 888, asparagine 913, asparagine 967, asparagine 991, asparagine 1097, and asparagine 1109. The helical transmembrane segment at 1150–1170 (IIIGISAIIVSIGVLITAILT) threads the bilayer. At 1171–1184 (FIYRKRKIMRYSNP) the chain is on the cytoplasmic side. Residues 1185–1205 (VFLLIILVGCVCGLVSTFVSF) traverse the membrane as a helical segment. At 1206 to 1211 (STTSAT) the chain is on the extracellular side. A helical membrane pass occupies residues 1212–1232 (CSIRMVLIPLFFFIITSAIFI). The Cytoplasmic portion of the chain corresponds to 1233–1256 (KQYRVYCLIRGVEELHDMSIENSY). The helical transmembrane segment at 1257–1277 (LLKLQSFILIIPAILIAVSVI) threads the bilayer. Residues 1278–1304 (ATRMHRKYNFDLQKETIQAYCYSKNFY) lie on the Extracellular side of the membrane. Residues 1305 to 1325 (IIFICLALYEFSILLYGCWIV) traverse the membrane as a helical segment. Over 1326 to 1340 (IKCRQYRSFPGSFNE) the chain is Cytoplasmic. Residues 1341–1361 (FFYIGVLIYVLTVILVVSIPI) traverse the membrane as a helical segment. The Extracellular segment spans residues 1362–1372 (GFALLNSALTD). A helical transmembrane segment spans residues 1373–1393 (FLLYSIPILVLIVAIIGLLFA). Residues 1394 to 1604 (PKFYFLFRTD…KSSQNSPLLD (211 aa)) are Cytoplasmic-facing. The segment at 1457–1604 (TGSNTSDDVS…KSSQNSPLLD (148 aa)) is disordered. Composition is skewed to low complexity over residues 1471–1527 (FDSP…NKNN) and 1534–1556 (SSSN…GRSS). The span at 1563–1572 (NNKKNRRKNS) shows a compositional bias: basic residues. A compositionally biased stretch (polar residues) spans 1573-1584 (LRTPILNSLLSP).

The protein belongs to the G-protein coupled receptor 3 family. GABA-B receptor subfamily.

It localises to the membrane. This chain is Metabotropic glutamate receptor-like protein R (grlR), found in Dictyostelium discoideum (Social amoeba).